We begin with the raw amino-acid sequence, 161 residues long: Nucleoside diphosphate kinase (161 aa).

Lys12, Phe60, Arg88, Thr94, and Arg105 together coordinate ATP. His121 serves as the catalytic Pros-phosphohistidine intermediate.

It belongs to the NDK family. The cofactor is Mg(2+).

The protein localises to the cytoplasm. The enzyme catalyses a 2'-deoxyribonucleoside 5'-diphosphate + ATP = a 2'-deoxyribonucleoside 5'-triphosphate + ADP. It catalyses the reaction a ribonucleoside 5'-diphosphate + ATP = a ribonucleoside 5'-triphosphate + ADP. Its function is as follows. Major role in the synthesis of nucleoside triphosphates other than ATP. The ATP gamma phosphate is transferred to the NDP beta phosphate via a ping-pong mechanism, using a phosphorylated active-site intermediate. This is Nucleoside diphosphate kinase from Pyrococcus furiosus (strain ATCC 43587 / DSM 3638 / JCM 8422 / Vc1).